A 208-amino-acid polypeptide reads, in one-letter code: MSRYTGSTFKKARRYGFSILENGKEFSKGKKRVTTPGQHGKDKARLKMSGYGAQLQEKQKVKFMYGMTERQFRNTFAKAKKVHGGILGTNFLVLLESRLDNIVFRLGFAMTRQAARQLVNHGHILVNGKKLDIPSYQVKPGDSIEVKEAMKKNDKIAEALQNNESTVEFVKVDKANLKGQFVRLPERQELNLEINDALIVEWYNRLIK.

The S4 RNA-binding domain maps to 97-160 (SRLDNIVFRL…KKNDKIAEAL (64 aa)).

The protein belongs to the universal ribosomal protein uS4 family. In terms of assembly, part of the 30S ribosomal subunit. Contacts protein S5. The interaction surface between S4 and S5 is involved in control of translational fidelity.

In terms of biological role, one of the primary rRNA binding proteins, it binds directly to 16S rRNA where it nucleates assembly of the body of the 30S subunit. Its function is as follows. With S5 and S12 plays an important role in translational accuracy. This is Small ribosomal subunit protein uS4 from Mesoplasma florum (strain ATCC 33453 / NBRC 100688 / NCTC 11704 / L1) (Acholeplasma florum).